Consider the following 344-residue polypeptide: Small ribosomal subunit protein uS3 (344 aa).

The KH type-2 domain maps to 38 to 106; the sequence is LKAALRERLK…EVFIDIQEVH (69 aa). Positions 217-344 are disordered; it reads PEPEPRREQR…QKPEGSGENQ (128 aa). Composition is skewed to basic and acidic residues over residues 219-259 and 335-344; these read PEPR…RGDR and QKPEGSGENQ.

This sequence belongs to the universal ribosomal protein uS3 family. Part of the 30S ribosomal subunit. Forms a tight complex with proteins S10 and S14.

Its function is as follows. Binds the lower part of the 30S subunit head. Binds mRNA in the 70S ribosome, positioning it for translation. The protein is Small ribosomal subunit protein uS3 of Solibacter usitatus (strain Ellin6076).